Here is a 158-residue protein sequence, read N- to C-terminus: UPF0311 protein CA_C3321 (158 aa).

Belongs to the UPF0311 family.

The sequence is that of UPF0311 protein CA_C3321 from Clostridium acetobutylicum (strain ATCC 824 / DSM 792 / JCM 1419 / IAM 19013 / LMG 5710 / NBRC 13948 / NRRL B-527 / VKM B-1787 / 2291 / W).